A 264-amino-acid chain; its full sequence is Acyl-[acyl-carrier-protein]--UDP-N-acetylglucosamine O-acyltransferase (264 aa).

This sequence belongs to the transferase hexapeptide repeat family. LpxA subfamily. In terms of assembly, homotrimer.

The protein localises to the cytoplasm. The catalysed reaction is a (3R)-hydroxyacyl-[ACP] + UDP-N-acetyl-alpha-D-glucosamine = a UDP-3-O-[(3R)-3-hydroxyacyl]-N-acetyl-alpha-D-glucosamine + holo-[ACP]. It functions in the pathway glycolipid biosynthesis; lipid IV(A) biosynthesis; lipid IV(A) from (3R)-3-hydroxytetradecanoyl-[acyl-carrier-protein] and UDP-N-acetyl-alpha-D-glucosamine: step 1/6. Functionally, involved in the biosynthesis of lipid A, a phosphorylated glycolipid that anchors the lipopolysaccharide to the outer membrane of the cell. This is Acyl-[acyl-carrier-protein]--UDP-N-acetylglucosamine O-acyltransferase from Albidiferax ferrireducens (strain ATCC BAA-621 / DSM 15236 / T118) (Rhodoferax ferrireducens).